The chain runs to 104 residues: Intracellular chorismate mutase (104 aa).

Residues 23–104 form the Chorismate mutase domain; the sequence is AVPEIDDLRR…LRLGRGRLGY (82 aa). Residues R59, V68, and E72 each coordinate chorismate.

As to quaternary structure, homodimer. Probably interacts with AroG (MSMEG_4244).

The protein localises to the cytoplasm. It carries out the reaction chorismate = prephenate. The protein operates within metabolic intermediate biosynthesis; prephenate biosynthesis; prephenate from chorismate: step 1/1. The formation of the complex with AroG activates the chorismate mutase activity. Catalyzes the Claisen rearrangement of chorismate to prephenate. Probably involved in the aromatic amino acid biosynthesis. This is Intracellular chorismate mutase from Mycolicibacterium smegmatis (strain ATCC 700084 / mc(2)155) (Mycobacterium smegmatis).